A 232-amino-acid polypeptide reads, in one-letter code: Ribose-5-phosphate isomerase A (232 aa).

Substrate contacts are provided by residues 28–31, 83–86, and 96–99; these read TGST, DGAD, and KGGG. Residue Glu105 is the Proton acceptor of the active site. A substrate-binding site is contributed by Lys123.

The protein belongs to the ribose 5-phosphate isomerase family. In terms of assembly, homodimer.

It carries out the reaction aldehydo-D-ribose 5-phosphate = D-ribulose 5-phosphate. The protein operates within carbohydrate degradation; pentose phosphate pathway; D-ribose 5-phosphate from D-ribulose 5-phosphate (non-oxidative stage): step 1/1. Catalyzes the reversible conversion of ribose-5-phosphate to ribulose 5-phosphate. The sequence is that of Ribose-5-phosphate isomerase A from Rhizobium etli (strain CIAT 652).